Reading from the N-terminus, the 885-residue chain is Alanine--tRNA ligase (885 aa).

Positions 574, 578, 685, and 689 each coordinate Zn(2+).

It belongs to the class-II aminoacyl-tRNA synthetase family. It depends on Zn(2+) as a cofactor.

The protein localises to the cytoplasm. The enzyme catalyses tRNA(Ala) + L-alanine + ATP = L-alanyl-tRNA(Ala) + AMP + diphosphate. In terms of biological role, catalyzes the attachment of alanine to tRNA(Ala) in a two-step reaction: alanine is first activated by ATP to form Ala-AMP and then transferred to the acceptor end of tRNA(Ala). Also edits incorrectly charged Ser-tRNA(Ala) and Gly-tRNA(Ala) via its editing domain. This chain is Alanine--tRNA ligase, found in Deinococcus geothermalis (strain DSM 11300 / CIP 105573 / AG-3a).